We begin with the raw amino-acid sequence, 876 residues long: Leucine--tRNA ligase (876 aa).

Residues 42–52 carry the 'HIGH' region motif; the sequence is PYPSGKLHMGH. A 'KMSKS' region motif is present at residues 634–638; that stretch reads KMSKS. Residue Lys-637 coordinates ATP.

Belongs to the class-I aminoacyl-tRNA synthetase family.

It is found in the cytoplasm. It catalyses the reaction tRNA(Leu) + L-leucine + ATP = L-leucyl-tRNA(Leu) + AMP + diphosphate. The protein is Leucine--tRNA ligase of Neisseria meningitidis serogroup B (strain ATCC BAA-335 / MC58).